The chain runs to 123 residues: Ribosome-binding factor A (123 aa).

It belongs to the RbfA family. Monomer. Binds 30S ribosomal subunits, but not 50S ribosomal subunits or 70S ribosomes.

The protein resides in the cytoplasm. Functionally, one of several proteins that assist in the late maturation steps of the functional core of the 30S ribosomal subunit. Associates with free 30S ribosomal subunits (but not with 30S subunits that are part of 70S ribosomes or polysomes). Required for efficient processing of 16S rRNA. May interact with the 5'-terminal helix region of 16S rRNA. In Chlorobium chlorochromatii (strain CaD3), this protein is Ribosome-binding factor A.